Here is a 356-residue protein sequence, read N- to C-terminus: Arginine kinase Lit v 2 (356 aa).

The 83-residue stretch at K9 to V91 folds into the Phosphagen kinase N-terminal domain. Residue G64–Y68 coordinates L-arginine. A Phosphagen kinase C-terminal domain is found at F119–M356. Residues S122 to R126 and H185 each bind ATP. E225 contacts L-arginine. Position 229 (R229) interacts with ATP. C271 provides a ligand contact to L-arginine. ATP contacts are provided by residues R280–H284 and R309–E314. E314 contacts L-arginine.

It belongs to the ATP:guanido phosphotransferase family. In terms of tissue distribution, expressed in muscle (at protein level). Expressed in muscle, heart, nerve, stomach and hemocytes, with the highest expression in muscle. Very low expression in eyestalk and intestine. Not expressed in hepatopancreas, gill and skin.

It carries out the reaction L-arginine + ATP = N(omega)-phospho-L-arginine + ADP + H(+). With respect to regulation, no change in activity after supplementation with 10 mM glucose. However, activity decreases significantly when glucose concentration is higher than 50 mM and almost all activity is lost with 200 mM glucose. Activity is significantly increased after treatment with 10 mM and 50 mM ATP. However, activity drops significantly with 200 mM ATP. Inhibited by 10-200 mM alpha-ketoglutarate. No change in activity after incubation with 10-200 mM L-citrulline, L-ornaline or glycerol. Its function is as follows. Catalyzes the reversible transfer of high energy ATP gamma-phosphate group to L-arginine. The protein is Arginine kinase Lit v 2 of Penaeus vannamei (Whiteleg shrimp).